Consider the following 73-residue polypeptide: Eukaryotic translation initiation factor 4 gamma 2 (73 aa).

The 70-residue stretch at 1–70 (QVHCYNSNFP…ETAEEEESEE (70 aa)) folds into the W2 domain.

This sequence belongs to the eukaryotic initiation factor 4G family. In terms of assembly, interacts with the serine/threonine protein kinases MKNK1 and MKNK2. Binds EIF4A and EIF3. In terms of processing, phosphorylation; hyperphosphorylated during mitosis.

Appears to play a role in the switch from cap-dependent to IRES-mediated translation during mitosis, apoptosis and viral infection. Cleaved by some caspases and viral proteases. This chain is Eukaryotic translation initiation factor 4 gamma 2 (EIF4G2), found in Gallus gallus (Chicken).